The primary structure comprises 128 residues: Small ribosomal subunit protein uS12 (128 aa).

Residues 1-29 (MPTINQLIRKGREPKERKSKSPALMGNPQ) form a disordered region. 3-methylthioaspartic acid is present on D89. The segment at 106 to 128 (GVEGRRQGRSKYGAKRPKEGGKK) is disordered.

This sequence belongs to the universal ribosomal protein uS12 family. Part of the 30S ribosomal subunit. Contacts proteins S8 and S17. May interact with IF1 in the 30S initiation complex.

With S4 and S5 plays an important role in translational accuracy. In terms of biological role, interacts with and stabilizes bases of the 16S rRNA that are involved in tRNA selection in the A site and with the mRNA backbone. Located at the interface of the 30S and 50S subunits, it traverses the body of the 30S subunit contacting proteins on the other side and probably holding the rRNA structure together. The combined cluster of proteins S8, S12 and S17 appears to hold together the shoulder and platform of the 30S subunit. The polypeptide is Small ribosomal subunit protein uS12 (Dictyoglomus turgidum (strain DSM 6724 / Z-1310)).